A 123-amino-acid polypeptide reads, in one-letter code: Large ribosomal subunit protein bL20 (123 aa).

Belongs to the bacterial ribosomal protein bL20 family.

Its function is as follows. Binds directly to 23S ribosomal RNA and is necessary for the in vitro assembly process of the 50S ribosomal subunit. It is not involved in the protein synthesizing functions of that subunit. The polypeptide is Large ribosomal subunit protein bL20 (Chlamydia trachomatis serovar L2b (strain UCH-1/proctitis)).